The chain runs to 431 residues: MTWLSGLYFISIASLVFCVIGLILSGIILISRKFLVKTHACKLKINDDDSLTKTVDSGRTLLSSLLDSGIPIPSPCGGKATCKQCKVKIVKNADQPLETDRATFSKQQLEQGWRLSCQTKVQHDMCLEIEERYLNASSWEGTVVSNDNVATFIKELVVSVSPEHPIPYKPGGYLQIRVPPYKTNTSDWKQTMAPEYYSDWEHFNLFDRTIDNSLLELDSANKAYSLASYPAELPVIKFNIRIATPPFINNAPNPEIPWGICSSYIFSLKPGDKITVSGPYGESFMKENNRPLIFLIGGAGSSFGRSHILDLLLNKHSTRDITLWYGARSLKENIYQEEYEKLEKDFSNFHYHLVLSEPLPEDIDSGWDKNDPEKTNFLFRAFELGQLSKLSNPEDYLYYVCGPPLHNSSILKLLDNYGVERSSIILDDFGS.

Residues 10–30 (ISIASLVFCVIGLILSGIILI) form a helical membrane-spanning segment. One can recognise a 2Fe-2S ferredoxin-type domain in the interval 41-133 (CKLKINDDDS…DMCLEIEERY (93 aa)). Positions 76, 82, 85, and 117 each coordinate [2Fe-2S] cluster. The FAD-binding FR-type domain maps to 136 to 286 (ASSWEGTVVS…SGPYGESFMK (151 aa)).

The protein belongs to the NqrF family. Composed of six subunits; NqrA, NqrB, NqrC, NqrD, NqrE and NqrF. It depends on [2Fe-2S] cluster as a cofactor. FAD serves as cofactor.

The protein resides in the cell inner membrane. It catalyses the reaction a ubiquinone + n Na(+)(in) + NADH + H(+) = a ubiquinol + n Na(+)(out) + NAD(+). NQR complex catalyzes the reduction of ubiquinone-1 to ubiquinol by two successive reactions, coupled with the transport of Na(+) ions from the cytoplasm to the periplasm. The first step is catalyzed by NqrF, which accepts electrons from NADH and reduces ubiquinone-1 to ubisemiquinone by a one-electron transfer pathway. The polypeptide is Na(+)-translocating NADH-quinone reductase subunit F (Chlamydia caviae (strain ATCC VR-813 / DSM 19441 / 03DC25 / GPIC) (Chlamydophila caviae)).